The sequence spans 2238 residues: Golgin subfamily A member 4 (2238 aa).

The interval 1-90 (MFKKLKQKIS…QTFAQKLQLR (90 aa)) is disordered. The residue at position 10 (Ser10) is a Phosphoserine. Residues 12 to 41 (EQQQLQQALAPAQASSSSSTPTRTRSRTSS) show a composition bias toward low complexity. The residue at position 39 (Thr39) is a Phosphothreonine. A Phosphoserine modification is found at Ser41. 2 stretches are compositionally biased toward polar residues: residues 52-62 (NRENASTQATK) and 73-85 (SPSQ…TFAQ). Ser93 and Ser100 each carry phosphoserine. 3 disordered regions span residues 132–154 (AAAF…NSDG), 1695–1744 (LKER…SQDC), and 1770–1789 (LEQG…HRAL). The interaction with MACF1 stretch occupies residues 154-224 (GLSREQLLQR…EELQMDQQAK (71 aa)). The stretch at 156–2161 (SREQLLQRLR…RYEKNACAAT (2006 aa)) forms a coiled coil. The segment covering 1695–1711 (LKEREKQVHSLEDKLKN) has biased composition (basic and acidic residues). Residues 2178-2225 (LFGEPTEFEYLRKVMFEYMMGRETKTMAKVITTVLKFPDDQAQKILER) form the GRIP domain.

Homodimer. Interacts with GTP-bound ARL1 and ARL3. Interacts with MACF1. Directly interacts with TBC1D23. Interacts with FAM91A1; this interaction may be mediated by TBC1D23. In terms of tissue distribution, ubiquitous. Highly expressed in oligodendrocyte precursors, particularly at a stage just prior to myelination.

The protein resides in the cytoplasm. Its subcellular location is the golgi apparatus membrane. It is found in the golgi apparatus. The protein localises to the trans-Golgi network membrane. Involved in vesicular trafficking at the Golgi apparatus level. May play a role in delivery of transport vesicles containing GPI-linked proteins from the trans-Golgi network through its interaction with MACF1. Involved in endosome-to-Golgi trafficking. The polypeptide is Golgin subfamily A member 4 (Golga4) (Mus musculus (Mouse)).